We begin with the raw amino-acid sequence, 550 residues long: Neuronal acetylcholine receptor subunit alpha-9-II (550 aa).

The N-terminal stretch at 1-20 is a signal peptide; it reads MRKMVPVVCFATMLLQVAHS. Residues 21-233 are Extracellular-facing; sequence AQGRYAQQLL…YTVLLQRRSS (213 aa). Asn-52 carries an N-linked (GlcNAc...) asparagine glycan. An intrachain disulfide couples Cys-150 to Cys-164. Residue Asn-165 is glycosylated (N-linked (GlcNAc...) asparagine). Cysteines 214 and 215 form a disulfide. 3 consecutive transmembrane segments (helical) span residues 234–254, 264–284, and 298–318; these read FYIFNLLLPCFLISFLAPLGF, VSLGVTVLLALTVFQLMVAES, and YIATMTMITASTALTIFIMNI. Residues 319–528 lie on the Cytoplasmic side of the membrane; sequence HFCGAEAKPV…WKRVAKVMDR (210 aa). Residues 357–439 form a disordered region; the sequence is TSSSSSSSSS…HLSSSKYEGF (83 aa). Residues 358 to 367 are compositionally biased toward low complexity; the sequence is SSSSSSSSSS. Residues 413-422 are compositionally biased toward basic residues; it reads RHPKPRHQHH. The chain crosses the membrane as a helical span at residues 529–549; that stretch reads FFMWIFFIMVFLMSILIIGKA.

This sequence belongs to the ligand-gated ion channel (TC 1.A.9) family. Acetylcholine receptor (TC 1.A.9.1) subfamily. In terms of tissue distribution, expressed in the brain, liver, olfactory mucosa, pituitary gland and hair cells of the saccule.

The protein localises to the postsynaptic cell membrane. The protein resides in the cell membrane. The polypeptide is Neuronal acetylcholine receptor subunit alpha-9-II (Oncorhynchus mykiss (Rainbow trout)).